A 311-amino-acid chain; its full sequence is Methionyl-tRNA formyltransferase (311 aa).

110 to 113 (SLLP) serves as a coordination point for (6S)-5,6,7,8-tetrahydrofolate.

The protein belongs to the Fmt family.

The catalysed reaction is L-methionyl-tRNA(fMet) + (6R)-10-formyltetrahydrofolate = N-formyl-L-methionyl-tRNA(fMet) + (6S)-5,6,7,8-tetrahydrofolate + H(+). Its function is as follows. Attaches a formyl group to the free amino group of methionyl-tRNA(fMet). The formyl group appears to play a dual role in the initiator identity of N-formylmethionyl-tRNA by promoting its recognition by IF2 and preventing the misappropriation of this tRNA by the elongation apparatus. This chain is Methionyl-tRNA formyltransferase, found in Streptococcus pyogenes serotype M28 (strain MGAS6180).